Reading from the N-terminus, the 365-residue chain is Chorismate synthase (365 aa).

Arg-47 contacts NADP(+). FMN contacts are provided by residues 124 to 126 (RAS), Gly-287, 302 to 306 (KPTAT), and Arg-328. Positions 266–290 (FIKSDDSSKLRTTSNNSGGIQGGIS) are disordered.

Belongs to the chorismate synthase family. In terms of assembly, homotetramer. FMNH2 serves as cofactor.

The catalysed reaction is 5-O-(1-carboxyvinyl)-3-phosphoshikimate = chorismate + phosphate. It functions in the pathway metabolic intermediate biosynthesis; chorismate biosynthesis; chorismate from D-erythrose 4-phosphate and phosphoenolpyruvate: step 7/7. Catalyzes the anti-1,4-elimination of the C-3 phosphate and the C-6 proR hydrogen from 5-enolpyruvylshikimate-3-phosphate (EPSP) to yield chorismate, which is the branch point compound that serves as the starting substrate for the three terminal pathways of aromatic amino acid biosynthesis. This reaction introduces a second double bond into the aromatic ring system. This is Chorismate synthase from Prochlorococcus marinus (strain MIT 9301).